The primary structure comprises 178 residues: MSATVRILGIDPGSRVTGFGVIDVRGRDHFYVASGCIKTPADAPLADRIAVIVRHIGEVVTVYKPQQAAVEQVFVNVNPASTLMLGQARGAALAALVSHKLPVSEYTALQVKQAVVGKGKAAKEQVQHMVVQMLGLSGTPQPDAADGLAVALTHALRNHGLAAKLNPSGMQVKRGRFQ.

Residues D11, E71, and D143 contribute to the active site. Mg(2+)-binding residues include D11, E71, and D143.

The protein belongs to the RuvC family. As to quaternary structure, homodimer which binds Holliday junction (HJ) DNA. The HJ becomes 2-fold symmetrical on binding to RuvC with unstacked arms; it has a different conformation from HJ DNA in complex with RuvA. In the full resolvosome a probable DNA-RuvA(4)-RuvB(12)-RuvC(2) complex forms which resolves the HJ. It depends on Mg(2+) as a cofactor.

It localises to the cytoplasm. It carries out the reaction Endonucleolytic cleavage at a junction such as a reciprocal single-stranded crossover between two homologous DNA duplexes (Holliday junction).. Functionally, the RuvA-RuvB-RuvC complex processes Holliday junction (HJ) DNA during genetic recombination and DNA repair. Endonuclease that resolves HJ intermediates. Cleaves cruciform DNA by making single-stranded nicks across the HJ at symmetrical positions within the homologous arms, yielding a 5'-phosphate and a 3'-hydroxyl group; requires a central core of homology in the junction. The consensus cleavage sequence is 5'-(A/T)TT(C/G)-3'. Cleavage occurs on the 3'-side of the TT dinucleotide at the point of strand exchange. HJ branch migration catalyzed by RuvA-RuvB allows RuvC to scan DNA until it finds its consensus sequence, where it cleaves and resolves the cruciform DNA. This chain is Crossover junction endodeoxyribonuclease RuvC, found in Neisseria meningitidis serogroup A / serotype 4A (strain DSM 15465 / Z2491).